The chain runs to 131 residues: Large ribosomal subunit protein bL17 (131 aa).

This sequence belongs to the bacterial ribosomal protein bL17 family. Part of the 50S ribosomal subunit. Contacts protein L32.

This Chromobacterium violaceum (strain ATCC 12472 / DSM 30191 / JCM 1249 / CCUG 213 / NBRC 12614 / NCIMB 9131 / NCTC 9757 / MK) protein is Large ribosomal subunit protein bL17.